Here is a 256-residue protein sequence, read N- to C-terminus: BI1-like protein (256 aa).

7 helical membrane-spanning segments follow: residues 53–73, 85–105, 113–133, 138–158, 167–187, 189–209, and 228–248; these read VYGILSAQLLLTTLISAVVVL, PGILLFLCIVPFILIWPLHIY, LILLALFTVSLSFTVGVSCAM, IVLQALILTLSVVGSLTAYTF, FSFLGPILFTSLIILVVTSFI, MFFPLGPTSVAVYGGFSALVF, and EYILASVALYLDILNLFLTIL.

The protein belongs to the BI1 family.

Its subcellular location is the membrane. The polypeptide is BI1-like protein (Arabidopsis thaliana (Mouse-ear cress)).